The primary structure comprises 361 residues: Divinyl chlorophyll a/b light-harvesting protein PcbD (361 aa).

The next 6 membrane-spanning stretches (helical) occupy residues 27 to 47, 93 to 113, 140 to 160, 201 to 221, 248 to 268, and 315 to 335; these read FIASHVGHTGLICFAAGGSTL, IVHLILSMVYGGGGLLHGILF, FILGHHLIFMGVACAWFVEWA, VMGGHAFLAFAEITGGAFHIV, AVLSWSLAGIGWMAIVAAFWC, and LTNVHYYLGFFFLQGHFWHAL.

Belongs to the PsbB/PsbC family. IsiA/Pcb subfamily. As to quaternary structure, the antenna complex consists of divinyl chlorophylls (a and b) and divinyl chlorophyll a/b binding proteins and binds more divinyl chlorophyll b than does the antenna complex from high-light-adapted Prochlorococcus. The cofactor is divinyl chlorophyll a. It depends on divinyl chlorophyll b as a cofactor.

Its subcellular location is the cellular thylakoid membrane. Its function is as follows. The antenna complex functions as a light receptor, it captures and delivers excitation energy to photosystems II and I. The Prochlorales pcb genes are not related to higher plant LHCs. This is Divinyl chlorophyll a/b light-harvesting protein PcbD (pcbD) from Prochlorococcus marinus (strain SARG / CCMP1375 / SS120).